A 239-amino-acid polypeptide reads, in one-letter code: Protein GrpE (239 aa).

2 disordered regions span residues 1–60 and 208–239; these read MIEN…SNND and SMGP…SEDV. Residues 28–42 are compositionally biased toward polar residues; sequence SMQNSTTENDELSSQ. Basic and acidic residues-rich tracts occupy residues 43-53 and 216-225; these read KTEEINTEELK and SQQEVEKDTV. Acidic residues predominate over residues 226-239; it reads EGDVDSDANTSEDV.

This sequence belongs to the GrpE family. Homodimer.

Its subcellular location is the cytoplasm. Participates actively in the response to hyperosmotic and heat shock by preventing the aggregation of stress-denatured proteins, in association with DnaK and GrpE. It is the nucleotide exchange factor for DnaK and may function as a thermosensor. Unfolded proteins bind initially to DnaJ; upon interaction with the DnaJ-bound protein, DnaK hydrolyzes its bound ATP, resulting in the formation of a stable complex. GrpE releases ADP from DnaK; ATP binding to DnaK triggers the release of the substrate protein, thus completing the reaction cycle. Several rounds of ATP-dependent interactions between DnaJ, DnaK and GrpE are required for fully efficient folding. This chain is Protein GrpE, found in Prochlorococcus marinus (strain MIT 9301).